Reading from the N-terminus, the 208-residue chain is dTTP/UTP pyrophosphatase (208 aa).

Aspartate 78 functions as the Proton acceptor in the catalytic mechanism.

This sequence belongs to the Maf family. YhdE subfamily. A divalent metal cation serves as cofactor.

The protein localises to the cytoplasm. The catalysed reaction is dTTP + H2O = dTMP + diphosphate + H(+). It carries out the reaction UTP + H2O = UMP + diphosphate + H(+). Nucleoside triphosphate pyrophosphatase that hydrolyzes dTTP and UTP. May have a dual role in cell division arrest and in preventing the incorporation of modified nucleotides into cellular nucleic acids. The polypeptide is dTTP/UTP pyrophosphatase (Maricaulis maris (strain MCS10) (Caulobacter maris)).